The sequence spans 914 residues: MSETQKENPYSSTVLLPKTDFPMKADLAKREPAQIQSWKSGQIFRKMKEQRKGKKEFVLHDGPPYANGNFHLGHSLNKIVKDIIIKSKSLAGFYADMIPGWDCHGLPIEVQVLKNLGKKARETGPEELRRLCRNYAEEFVGKQGEDLSRFLCFWEEDRIYKTMSPGFEAKIVEVFGELFQKGYVYRGKKPVYWSIDLATAHAEAEIEYYPHVSPSIYVKFPIVGEQKKFCLIWTTTPWTLPANLGICFNRKIEYSFFKTESGEELILADGLAESVTSTTGVSLNKVKSISSDELSVLKFQHPFMDRISISLFGDHVTLDAGTGCVHTAPGHGQDDYKVGLAAGLEPFSPVDDYGKYTDEFPLMQGKKVFDANPEIIQLLKDKGLLLHHSEFEHSYPHSWRSKKPLIFRATPQWFFKMDFNELREKSLSAIDGVQWIPSWGITRIRSMVETRPDWCLSRQRNWGVPIPAFTCESCGQTHIDDVSIQFFTKMVREKGIEIWYSEKAADLLPPGTKCGKCGSDSFKKGNDILDVWFDSGVSSFAVLGERKDEPPADLYFEGSDQHRGWFQSSLWPSMALRGIPPYKTVLTHGYVLDEKGHPMSKSLGNGIDPTADVIQIYGADILRLWVSSLDFRDDIKVGKESLKIVSEQYRKIRNTFRYLLGNLDGHTSEQNLPFEELEELDLFYLSKLSQFAEDVIANYEAYQFHQIYQKLILFCTVTLSQDYFDMIRDRMYCDARNSKTRKSSATALQYILETLCILTAPILSFTAEEVWVSNGKKDSVFLQNFPDLKFWKNQNLEEKFESVLQVREVVQKALEIARQENKLGKSLEAGLEIVSKNGTNLTKILPKETLEILFVVSQVHEKNPGLDVLSFYENEKFSVKVLKPVQVECPRCWRHTEDISKEGDLCGRCKSVVG.

The short motif at 64–74 (PYANGNFHLGH) is the 'HIGH' region element. L-isoleucyl-5'-AMP is bound at residue glutamate 557. Positions 598 to 602 (PMSKS) match the 'KMSKS' region motif. Position 601 (lysine 601) interacts with ATP. Zn(2+) is bound by residues cysteine 889, cysteine 892, cysteine 906, and cysteine 909.

This sequence belongs to the class-I aminoacyl-tRNA synthetase family. IleS type 1 subfamily. As to quaternary structure, monomer. Zn(2+) serves as cofactor.

The protein resides in the cytoplasm. It carries out the reaction tRNA(Ile) + L-isoleucine + ATP = L-isoleucyl-tRNA(Ile) + AMP + diphosphate. Its function is as follows. Catalyzes the attachment of isoleucine to tRNA(Ile). As IleRS can inadvertently accommodate and process structurally similar amino acids such as valine, to avoid such errors it has two additional distinct tRNA(Ile)-dependent editing activities. One activity is designated as 'pretransfer' editing and involves the hydrolysis of activated Val-AMP. The other activity is designated 'posttransfer' editing and involves deacylation of mischarged Val-tRNA(Ile). The chain is Isoleucine--tRNA ligase from Leptospira interrogans serogroup Icterohaemorrhagiae serovar copenhageni (strain Fiocruz L1-130).